The chain runs to 463 residues: Fumarate hydratase class II (463 aa).

Substrate is bound by residues 98–100, 129–132, 139–141, and threonine 187; these read SGT, HPND, and SSN. Histidine 188 (proton donor/acceptor) is an active-site residue. Serine 318 is an active-site residue. Substrate contacts are provided by residues serine 319 and 324-326; that span reads KVN.

It belongs to the class-II fumarase/aspartase family. Fumarase subfamily. In terms of assembly, homotetramer.

The protein resides in the cytoplasm. It carries out the reaction (S)-malate = fumarate + H2O. Its pathway is carbohydrate metabolism; tricarboxylic acid cycle; (S)-malate from fumarate: step 1/1. Involved in the TCA cycle. Catalyzes the stereospecific interconversion of fumarate to L-malate. The sequence is that of Fumarate hydratase class II from Rhizobium meliloti (strain 1021) (Ensifer meliloti).